A 105-amino-acid polypeptide reads, in one-letter code: Nucleoid-associated protein ABO_1774 (105 aa).

The disordered stretch occupies residues 85 to 105 (QQQDSMQNMAGGFPFPPGFKP).

It belongs to the YbaB/EbfC family. As to quaternary structure, homodimer.

It localises to the cytoplasm. The protein resides in the nucleoid. Binds to DNA and alters its conformation. May be involved in regulation of gene expression, nucleoid organization and DNA protection. The protein is Nucleoid-associated protein ABO_1774 of Alcanivorax borkumensis (strain ATCC 700651 / DSM 11573 / NCIMB 13689 / SK2).